A 129-amino-acid polypeptide reads, in one-letter code: Protein RALF-like 34 (129 aa).

Positions 1–23 (MAASSLNLLLILSLLTFISLQRS) are cleaved as a signal peptide. Positions 24 to 76 (ESLSDNPSLTLLPDGFDWPISHSDEFDIIDGEESFEVTEEDDGVTDRRSLYWR) are cleaved as a propeptide — removed in mature form. 2 disulfide bridges follow: Cys94–Cys107 and Cys121–Cys127.

Belongs to the plant rapid alkalinization factor (RALF) family. In terms of processing, proteolytically cleaved, probably by S1P, a subtilisin-like serine protease (subtilase). As to expression, expressed in roots, stems and leaves.

The protein resides in the secreted. In terms of biological role, cell signaling peptide that may regulate plant stress, growth, and development. Mediates a rapid alkalinization of extracellular space by mediating a transient increase in the cytoplasmic Ca(2+) concentration leading to a calcium-dependent signaling events through a cell surface receptor and a concomitant activation of some intracellular mitogen-activated protein kinases. This is Protein RALF-like 34 (RALFL34) from Arabidopsis thaliana (Mouse-ear cress).